Consider the following 91-residue polypeptide: MQQDKQPDYHPVVFRDRAAGYAFLTRSTATSDKTIEWDDGETYPVVDVEISSESHPFYTGKARTVDSEGRIAQFERRYGSTGPGSDGGGAA.

Belongs to the bacterial ribosomal protein bL31 family. Type B subfamily. As to quaternary structure, part of the 50S ribosomal subunit.

The polypeptide is Large ribosomal subunit protein bL31B-1 (Streptomyces avermitilis (strain ATCC 31267 / DSM 46492 / JCM 5070 / NBRC 14893 / NCIMB 12804 / NRRL 8165 / MA-4680)).